The following is a 58-amino-acid chain: Potassium channel toxin alpha-KTx 26.2 (58 aa).

The first 19 residues, 1–19, serve as a signal peptide directing secretion; that stretch reads MKTIFVVILVLFVLSAMLA. Cystine bridges form between cysteine 31/cysteine 49, cysteine 35/cysteine 54, and cysteine 39/cysteine 56.

Belongs to the short scorpion toxin superfamily. Potassium channel inhibitor family. Alpha-KTx 26 subfamily. In terms of tissue distribution, expressed by the venom gland.

The protein localises to the secreted. Inhibits voltage-gated potassium channels. The sequence is that of Potassium channel toxin alpha-KTx 26.2 from Lychas mucronatus (Chinese swimming scorpion).